Consider the following 200-residue polypeptide: Recombination protein RecR (200 aa).

The C4-type zinc finger occupies 58-75 (CPDCFCLKTSKTSSCDFC). The Toprim domain maps to 82–177 (SFLCIVATPK…KISRLALGMP (96 aa)).

This sequence belongs to the RecR family.

Functionally, may play a role in DNA repair. It seems to be involved in an RecBC-independent recombinational process of DNA repair. It may act with RecF and RecO. The chain is Recombination protein RecR from Chlamydia muridarum (strain MoPn / Nigg).